A 379-amino-acid chain; its full sequence is Subtilisin Carlsberg (379 aa).

The first 29 residues, 1-29 (MMRKKSFWLGMLTAFMLVFTMAFSDSASA), serve as a signal peptide directing secretion. Residues 30–105 (AQPAKNVEKD…VEEDHVAHAL (76 aa)) constitute a propeptide that is removed on maturation. One can recognise an Inhibitor I9 domain in the interval 44–102 (FKSGVKTASVKKDIIKESGGKVDKQFRIINAAKAKLDKEALKEVKNDPDVAYVEEDHVA). Glutamine 107 is a binding site for Ca(2+). The region spanning 110–378 (PYGIPLIKAD…KGLINVEAAA (269 aa)) is the Peptidase S8 domain. The active-site Charge relay system is aspartate 137. Aspartate 146 contributes to the Ca(2+) binding site. The active-site Charge relay system is the histidine 168. Leucine 179, asparagine 181, threonine 183, valine 185, alanine 273, tyrosine 275, and valine 278 together coordinate Ca(2+). Residue serine 325 is the Charge relay system of the active site.

It belongs to the peptidase S8 family. Requires Ca(2+) as cofactor.

The protein localises to the secreted. It catalyses the reaction Hydrolysis of proteins with broad specificity for peptide bonds, and a preference for a large uncharged residue in P1. Hydrolyzes peptide amides.. Inhibited by p-chlorophenyl and 1-naphthyl boronic acid derivatives. Subtilisin is an extracellular alkaline serine protease, it catalyzes the hydrolysis of proteins and peptide amides. Shows high specificity for aromatic and hydrophobic amino acids in the P1 substrate position. May play an important role in the degradation of feather keratin. In Bacillus licheniformis, this protein is Subtilisin Carlsberg.